The primary structure comprises 349 residues: UPF0283 membrane protein Ent638_2153 (349 aa).

3 helical membrane-spanning segments follow: residues 70 to 90 (MVTAGLTLFGISVVGQGVQWT), 99 to 119 (WVALGGCAAGALIIGAGVGSV), and 213 to 233 (ESTLMIAVSPLALVDMAFIAW).

Belongs to the UPF0283 family.

The protein localises to the cell inner membrane. In Enterobacter sp. (strain 638), this protein is UPF0283 membrane protein Ent638_2153.